We begin with the raw amino-acid sequence, 142 residues long: Large ribosomal subunit protein bL17 (142 aa).

The protein belongs to the bacterial ribosomal protein bL17 family. Part of the 50S ribosomal subunit. Contacts protein L32.

The protein is Large ribosomal subunit protein bL17 of Wolbachia pipientis wMel.